A 326-amino-acid polypeptide reads, in one-letter code: Aspartate--ammonia ligase (326 aa).

It belongs to the class-II aminoacyl-tRNA synthetase family. AsnA subfamily.

The protein localises to the cytoplasm. It catalyses the reaction L-aspartate + NH4(+) + ATP = L-asparagine + AMP + diphosphate + H(+). It participates in amino-acid biosynthesis; L-asparagine biosynthesis; L-asparagine from L-aspartate (ammonia route): step 1/1. This is Aspartate--ammonia ligase from Malacoplasma penetrans (strain HF-2) (Mycoplasma penetrans).